We begin with the raw amino-acid sequence, 277 residues long: MLLNILDIQAKKGLEKIACLTAYTFPMARILDEHCDLILVGDSVGQTVYGMESTLSVTLDIMIAHGKAVVKARSKALVVVDMPFASYYTPELAYKNASRILSETGCDAVKLEGGVCVAEEIAFLVARGIPVMGHVGLMPQHFNQLGGYKCQGKTDSSRQHIKEDAKAVCEAGAFCVVLECISPSLAAELTQELPVPTIGIGASNACDGQILVVDDMLGQSSRYPKFVKRFADLEHTIKDAVVGYVRAVKCSEFPGDEHCYSDGPHLRVFRAHPHHAQ.

Positions 42 and 81 each coordinate Mg(2+). 3-methyl-2-oxobutanoate is bound by residues 42 to 43 (DS), D81, and K110. Residue E112 participates in Mg(2+) binding. Catalysis depends on E179, which acts as the Proton acceptor.

It belongs to the PanB family. Homodecamer; pentamer of dimers. Mg(2+) serves as cofactor.

The protein resides in the cytoplasm. It carries out the reaction 3-methyl-2-oxobutanoate + (6R)-5,10-methylene-5,6,7,8-tetrahydrofolate + H2O = 2-dehydropantoate + (6S)-5,6,7,8-tetrahydrofolate. The protein operates within cofactor biosynthesis; (R)-pantothenate biosynthesis; (R)-pantoate from 3-methyl-2-oxobutanoate: step 1/2. Its function is as follows. Catalyzes the reversible reaction in which hydroxymethyl group from 5,10-methylenetetrahydrofolate is transferred onto alpha-ketoisovalerate to form ketopantoate. This is 3-methyl-2-oxobutanoate hydroxymethyltransferase from Anaplasma marginale (strain Florida).